Here is a 2351-residue protein sequence, read N- to C-terminus: Protein FAM186A (2351 aa).

Positions 296–340 (EAEKELSLKIIRDLSNENEMLQQKLQDAEEKCEQLIRSKIVIEQL) form a coiled coil. Disordered regions lie at residues 412–460 (ERTP…SWKR), 470–489 (ETSG…SEAK), 505–538 (EMKS…GKSG), 593–667 (QFDD…SEQS), 809–838 (STVQ…SGMS), 868–976 (LQMK…RGLE), 1805–1837 (GGQS…PGQP), and 1888–1907 (FQPP…STPG). Over residues 433 to 446 (DSTKDNVSLKKGDF) the composition is skewed to basic and acidic residues. Residues 472–484 (SGPNLSDNKSGQK) are compositionally biased toward polar residues. Over residues 506 to 520 (MKSFSEDKSKSPTEA) the composition is skewed to basic and acidic residues. Residues 527 to 538 (LTETKSQGGKSG) are compositionally biased toward polar residues. Basic residues predominate over residues 603–612 (GKIKGKKHHI). Composition is skewed to basic and acidic residues over residues 619-632 (SKEE…ELTK) and 812-823 (QKDHKEKEKQRQ). Residues 812-860 (QKDHKEKEKQRQEQYLQEGQEQMSGMSLKQQLLGERNLLKEHYEKISEN) are a coiled coil. Positions 824–838 (EQYLQEGQEQMSGMS) are enriched in polar residues. Composition is skewed to basic and acidic residues over residues 901–912 (AEQEEKQKQRGQ), 939–955 (LEKE…EAKH), and 964–976 (KGKE…RGLE). The span at 1816-1835 (PQAPPSPGQLPISRAPPTPG) shows a compositional bias: pro residues. A compositionally biased stretch (polar residues) spans 1894–1907 (AEQSPYLQAPSTPG).

The protein belongs to the FAM186 family.

This is Protein FAM186A (FAM186A) from Homo sapiens (Human).